Reading from the N-terminus, the 194-residue chain is Molybdenum cofactor guanylyltransferase (194 aa).

GTP is bound by residues Leu-12 to Gly-14, Lys-25, Asn-53, Asp-70, and Asp-100. Asp-100 contributes to the Mg(2+) binding site.

The protein belongs to the MobA family. As to quaternary structure, monomer. Requires Mg(2+) as cofactor.

Its subcellular location is the cytoplasm. The enzyme catalyses Mo-molybdopterin + GTP + H(+) = Mo-molybdopterin guanine dinucleotide + diphosphate. Transfers a GMP moiety from GTP to Mo-molybdopterin (Mo-MPT) cofactor (Moco or molybdenum cofactor) to form Mo-molybdopterin guanine dinucleotide (Mo-MGD) cofactor. This chain is Molybdenum cofactor guanylyltransferase, found in Aliivibrio fischeri (strain MJ11) (Vibrio fischeri).